Consider the following 74-residue polypeptide: UPF0154 protein LSL_0542 (74 aa).

Residues 5 to 25 (IWVLIVIIAAVLGFVGGFFAA) traverse the membrane as a helical segment.

The protein belongs to the UPF0154 family.

The protein localises to the cell membrane. The sequence is that of UPF0154 protein LSL_0542 from Ligilactobacillus salivarius (strain UCC118) (Lactobacillus salivarius).